The chain runs to 171 residues: UPF0303 protein YPK_1581 (171 aa).

Belongs to the UPF0303 family.

The protein is UPF0303 protein YPK_1581 of Yersinia pseudotuberculosis serotype O:3 (strain YPIII).